We begin with the raw amino-acid sequence, 491 residues long: Aspartyl/glutamyl-tRNA(Asn/Gln) amidotransferase subunit B (491 aa).

The protein belongs to the GatB/GatE family. GatB subfamily. In terms of assembly, heterotrimer of A, B and C subunits.

It catalyses the reaction L-glutamyl-tRNA(Gln) + L-glutamine + ATP + H2O = L-glutaminyl-tRNA(Gln) + L-glutamate + ADP + phosphate + H(+). The catalysed reaction is L-aspartyl-tRNA(Asn) + L-glutamine + ATP + H2O = L-asparaginyl-tRNA(Asn) + L-glutamate + ADP + phosphate + 2 H(+). Its function is as follows. Allows the formation of correctly charged Asn-tRNA(Asn) or Gln-tRNA(Gln) through the transamidation of misacylated Asp-tRNA(Asn) or Glu-tRNA(Gln) in organisms which lack either or both of asparaginyl-tRNA or glutaminyl-tRNA synthetases. The reaction takes place in the presence of glutamine and ATP through an activated phospho-Asp-tRNA(Asn) or phospho-Glu-tRNA(Gln). This is Aspartyl/glutamyl-tRNA(Asn/Gln) amidotransferase subunit B from Burkholderia cenocepacia (strain ATCC BAA-245 / DSM 16553 / LMG 16656 / NCTC 13227 / J2315 / CF5610) (Burkholderia cepacia (strain J2315)).